The chain runs to 90 residues: MAKASEHFFYVLKCSDNSYYGGYTTDVLRREAEHNAGIRCKYTKTRRPVKVIHFEKFETRSEATKAEAAFKKLSRKNKDAYLIQREEESE.

Residues 5–80 (SEHFFYVLKC…KKLSRKNKDA (76 aa)) enclose the GIY-YIG domain.

The protein belongs to the UPF0213 family.

The polypeptide is UPF0213 protein lmo0166 (Listeria monocytogenes serovar 1/2a (strain ATCC BAA-679 / EGD-e)).